The primary structure comprises 445 residues: CBL-interacting serine/threonine-protein kinase 5 (445 aa).

Positions 12–267 constitute a Protein kinase domain; it reads YEMGRLLGKG…IPAIMRTPWL (256 aa). ATP-binding positions include 18–26 and K41; that span reads LGKGTFAKV. Residue D135 is the Proton acceptor of the active site. The activation loop stretch occupies residues 153 to 182; the sequence is DFGLSALPEQILQDGLLHTQCGTPAYVAPE. Phosphoserine is present on S157. Residue T171 is modified to Phosphothreonine. One can recognise an NAF domain in the interval 307–332; that stretch reads ISPKFFNAFEFISSMSSGFDLSSLFE. A PPI region spans residues 336–366; sequence KVQSVFTSRSSATEVMEKIETVTKEMNMKVK.

This sequence belongs to the protein kinase superfamily. CAMK Ser/Thr protein kinase family. SNF1 subfamily. The cofactor is Mn(2+).

It carries out the reaction L-seryl-[protein] + ATP = O-phospho-L-seryl-[protein] + ADP + H(+). It catalyses the reaction L-threonyl-[protein] + ATP = O-phospho-L-threonyl-[protein] + ADP + H(+). CIPK serine-threonine protein kinases interact with CBL proteins. Binding of a CBL protein to the regulatory NAF domain of CIPK protein lead to the activation of the kinase in a calcium-dependent manner. This Arabidopsis thaliana (Mouse-ear cress) protein is CBL-interacting serine/threonine-protein kinase 5 (CIPK5).